A 185-amino-acid polypeptide reads, in one-letter code: Large ribosomal subunit protein uL5 (185 aa).

Belongs to the universal ribosomal protein uL5 family. Part of the 50S ribosomal subunit; part of the 5S rRNA/L5/L18/L25 subcomplex. Contacts the 5S rRNA and the P site tRNA. Forms a bridge to the 30S subunit in the 70S ribosome.

Its function is as follows. This is one of the proteins that bind and probably mediate the attachment of the 5S RNA into the large ribosomal subunit, where it forms part of the central protuberance. In the 70S ribosome it contacts protein S13 of the 30S subunit (bridge B1b), connecting the 2 subunits; this bridge is implicated in subunit movement. Contacts the P site tRNA; the 5S rRNA and some of its associated proteins might help stabilize positioning of ribosome-bound tRNAs. In Treponema pallidum (strain Nichols), this protein is Large ribosomal subunit protein uL5.